We begin with the raw amino-acid sequence, 90 residues long: MSRTVFCTFLNREAEGLDFQSYPGDLGKRIYDHISKEAWGQWMAKQTMLINEKKLNMMNPDDRSLLAREMEKFLFEGHDVHIEGYTPPNQ.

It belongs to the Fe(2+)-trafficking protein family. As to quaternary structure, monomer.

Its function is as follows. Could be a mediator in iron transactions between iron acquisition and iron-requiring processes, such as synthesis and/or repair of Fe-S clusters in biosynthetic enzymes. The sequence is that of Probable Fe(2+)-trafficking protein from Edwardsiella ictaluri (strain 93-146).